The following is a 200-amino-acid chain: NADH-quinone oxidoreductase subunit C (200 aa).

Belongs to the complex I 30 kDa subunit family. In terms of assembly, NDH-1 is composed of 14 different subunits. Subunits NuoB, C, D, E, F, and G constitute the peripheral sector of the complex.

The protein localises to the cell inner membrane. It carries out the reaction a quinone + NADH + 5 H(+)(in) = a quinol + NAD(+) + 4 H(+)(out). Functionally, NDH-1 shuttles electrons from NADH, via FMN and iron-sulfur (Fe-S) centers, to quinones in the respiratory chain. The immediate electron acceptor for the enzyme in this species is believed to be ubiquinone. Couples the redox reaction to proton translocation (for every two electrons transferred, four hydrogen ions are translocated across the cytoplasmic membrane), and thus conserves the redox energy in a proton gradient. The sequence is that of NADH-quinone oxidoreductase subunit C from Paraburkholderia xenovorans (strain LB400).